Consider the following 90-residue polypeptide: Small ribosomal subunit protein uS19 (90 aa).

Belongs to the universal ribosomal protein uS19 family.

Protein S19 forms a complex with S13 that binds strongly to the 16S ribosomal RNA. The chain is Small ribosomal subunit protein uS19 from Hydrogenovibrio crunogenus (strain DSM 25203 / XCL-2) (Thiomicrospira crunogena).